The primary structure comprises 256 residues: 3-dehydroquinate dehydratase (256 aa).

3-dehydroquinate is bound by residues 46-48 (EWR) and Arg-82. Catalysis depends on His-144, which acts as the Proton donor/acceptor. Lys-171 functions as the Schiff-base intermediate with substrate in the catalytic mechanism. The 3-dehydroquinate site is built by Arg-213, Ser-232, and Gln-236.

It belongs to the type-I 3-dehydroquinase family. Homodimer.

The enzyme catalyses 3-dehydroquinate = 3-dehydroshikimate + H2O. Its pathway is metabolic intermediate biosynthesis; chorismate biosynthesis; chorismate from D-erythrose 4-phosphate and phosphoenolpyruvate: step 3/7. Its function is as follows. Involved in the third step of the chorismate pathway, which leads to the biosynthesis of aromatic amino acids. Catalyzes the cis-dehydration of 3-dehydroquinate (DHQ) and introduces the first double bond of the aromatic ring to yield 3-dehydroshikimate. The sequence is that of 3-dehydroquinate dehydratase from Shouchella clausii (strain KSM-K16) (Alkalihalobacillus clausii).